We begin with the raw amino-acid sequence, 128 residues long: Small ribosomal subunit protein eS8 (128 aa).

It belongs to the eukaryotic ribosomal protein eS8 family. As to quaternary structure, part of the 30S ribosomal subunit.

This chain is Small ribosomal subunit protein eS8, found in Methanococcus maripaludis (strain C5 / ATCC BAA-1333).